The following is a 46-amino-acid chain: Large ribosomal subunit protein bL36 (46 aa).

The protein belongs to the bacterial ribosomal protein bL36 family.

The chain is Large ribosomal subunit protein bL36 from Serratia proteamaculans (strain 568).